Here is a 459-residue protein sequence, read N- to C-terminus: Ribulose bisphosphate carboxylase large chain (459 aa).

Lys4 is modified (N6,N6,N6-trimethyllysine). Asn113 and Thr163 together coordinate substrate. Catalysis depends on Lys165, which acts as the Proton acceptor. Lys167 serves as a coordination point for substrate. Residues Lys191, Asp193, and Glu194 each coordinate Mg(2+). N6-carboxylysine is present on Lys191. The active-site Proton acceptor is the His284. Arg285, His317, and Ser369 together coordinate substrate.

The protein belongs to the RuBisCO large chain family. Type I subfamily. Heterohexadecamer of 8 large chains and 8 small chains; disulfide-linked. The disulfide link is formed within the large subunit homodimers. Mg(2+) serves as cofactor. Post-translationally, the disulfide bond which can form in the large chain dimeric partners within the hexadecamer appears to be associated with oxidative stress and protein turnover.

It localises to the plastid. It is found in the chloroplast. The enzyme catalyses 2 (2R)-3-phosphoglycerate + 2 H(+) = D-ribulose 1,5-bisphosphate + CO2 + H2O. It carries out the reaction D-ribulose 1,5-bisphosphate + O2 = 2-phosphoglycolate + (2R)-3-phosphoglycerate + 2 H(+). Functionally, ruBisCO catalyzes two reactions: the carboxylation of D-ribulose 1,5-bisphosphate, the primary event in carbon dioxide fixation, as well as the oxidative fragmentation of the pentose substrate in the photorespiration process. Both reactions occur simultaneously and in competition at the same active site. The polypeptide is Ribulose bisphosphate carboxylase large chain (Morus alba (White mulberry)).